Reading from the N-terminus, the 564-residue chain is 5-hydroxytryptamine receptor 1 (564 aa).

Residues 1–26 (MALSGQDWRRHQSHRQHRNHRTQGNH) are disordered. Residues 11-23 (HQSHRQHRNHRTQ) show a composition bias toward basic residues. Residues 29 to 51 (LISTATLTLFVLFLSSWIAYAAG) form a helical membrane-spanning segment. 9 consecutive repeat copies span residues 89–90 (GS), 91–92 (GS), 93–94 (GS), 95–96 (GS), 97–98 (GS), 99–100 (GS), 101–102 (GS), 103–104 (GS), and 105–106 (GS). A 9 X 2 AA tandem repeats of G-S region spans residues 89 to 106 (GSGSGSGSGSGSGSGSGS). The helical transmembrane segment at 165-188 (VSIVLLIVILGTVVGNVLVCIAVC) threads the bilayer. At 189–198 (MVRKLRRPCN) the chain is on the cytoplasmic side. Residues 199–222 (YLLVSLALSDLCVALLVMPMALLY) form a helical membrane-spanning segment. Over 223-236 (EVLEKWNFGPLLCD) the chain is Extracellular. The cysteines at positions 235 and 314 are disulfide-linked. The helical transmembrane segment at 237–258 (IWVSFDVLCCTASILNLCAISV) threads the bilayer. The tract at residues 238-247 (WVSFDVLCCT) is agonist binding. Ergotamine-binding residues include Asp242 and Thr247. Positions 259–261 (DRY) match the DRY motif; important for ligand-induced conformation changes motif. Residues 259–278 (DRYLAITKPLEYGVKRTPRR) are Cytoplasmic-facing. A helical membrane pass occupies residues 279-302 (MMLCVGIVWLAAACISLPPLLILG). Residues 303-330 (NEHEDEEGQPICTVCQNFAYQIYATLGS) are Extracellular-facing. Residues 331-353 (FYIPLSVMLFVYYQIFRAARRIV) form a helical membrane-spanning segment. The Cytoplasmic portion of the chain corresponds to 354–454 (LEEKRAQTHL…QLAKEKKAST (101 aa)). The interval 367 to 396 (LNGTGSPSAPQAPPLGHTELASSGNGQRHS) is disordered. Residues 386-396 (LASSGNGQRHS) show a composition bias toward polar residues. Residues 455–476 (TLGIIMSAFTVCWLPFFILALI) traverse the membrane as a helical segment. Residues 477–487 (RPFETMHVPAS) lie on the Extracellular side of the membrane. A helical membrane pass occupies residues 488 to 510 (LSSLFLWLGYANSLLNPIIYATL). The short motif at 503 to 507 (NPIIY) is the NPxxY motif; important for ligand-induced conformation changes and signaling element. Residues 511–564 (NRDFRKPFQEILYFRCSSLNTMMRENYYQDQYGEPPSQRVMLGDERHGARESFL) lie on the Cytoplasmic side of the membrane.

This sequence belongs to the G-protein coupled receptor 1 family. 5-hydroxytryptamine receptor subfamily. Expressed predominantly in adult heads.

It is found in the cell membrane. In terms of biological role, G-protein coupled receptor for 5-hydroxytryptamine (serotonin). Also functions as a receptor for various alkaloids. Ligand binding causes a conformation change that triggers signaling via guanine nucleotide-binding proteins (G proteins) and modulates the activity of down-stream effectors, such as adenylate cyclase. Signaling activates adenylate cyclase activity. The polypeptide is 5-hydroxytryptamine receptor 1 (5-HT7) (Drosophila melanogaster (Fruit fly)).